The sequence spans 671 residues: Peroxisomal membrane protein PEX17 (671 aa).

8 helical membrane-spanning segments follow: residues 127-147 (LPLL…GPTL), 187-207 (VPVL…DVAI), 212-232 (FLQV…GTAL), 258-278 (VVAL…HVDI), 318-338 (YLKW…NMLL), 372-392 (FAAY…EYAP), 475-495 (LVEA…NAVV), and 504-524 (MGGV…VLAI).

Its subcellular location is the peroxisome membrane. Its function is as follows. Involved in peroxisome biosynthesis. Required for the import of a subset of matrix proteins into peroxisomes. The protein is Peroxisomal membrane protein PEX17 (PEX17) of Yarrowia lipolytica (strain CLIB 122 / E 150) (Yeast).